We begin with the raw amino-acid sequence, 54 residues long: Photosystem II reaction center protein K (54 aa).

Residues 1–17 (MSFITLNNFFNTNTFFG) constitute a propeptide that is removed on maturation. Residues 29 to 49 (LIDVLPIIPVLFFLLAFVWQA) traverse the membrane as a helical segment.

Belongs to the PsbK family. As to quaternary structure, PSII is composed of 1 copy each of membrane proteins PsbA, PsbB, PsbC, PsbD, PsbE, PsbF, PsbH, PsbI, PsbJ, PsbK, PsbL, PsbM, PsbT, PsbY, PsbZ, Psb30/Ycf12, at least 3 peripheral proteins of the oxygen-evolving complex and a large number of cofactors. It forms dimeric complexes.

Its subcellular location is the plastid. The protein localises to the chloroplast thylakoid membrane. Its function is as follows. One of the components of the core complex of photosystem II (PSII). PSII is a light-driven water:plastoquinone oxidoreductase that uses light energy to abstract electrons from H(2)O, generating O(2) and a proton gradient subsequently used for ATP formation. It consists of a core antenna complex that captures photons, and an electron transfer chain that converts photonic excitation into a charge separation. The sequence is that of Photosystem II reaction center protein K from Euglena gracilis.